Consider the following 279-residue polypeptide: NH(3)-dependent NAD(+) synthetase (279 aa).

40–47 is a binding site for ATP; that stretch reads GLSGGIDS. Asp46 is a Mg(2+) binding site. Arg122 serves as a coordination point for deamido-NAD(+). An ATP-binding site is contributed by Thr142. Mg(2+) is bound at residue Glu147. Deamido-NAD(+)-binding residues include Lys155 and Asp162. 2 residues coordinate ATP: Lys171 and Ser193. 253–254 contributes to the deamido-NAD(+) binding site; sequence HK.

The protein belongs to the NAD synthetase family. Homodimer.

It carries out the reaction deamido-NAD(+) + NH4(+) + ATP = AMP + diphosphate + NAD(+) + H(+). It functions in the pathway cofactor biosynthesis; NAD(+) biosynthesis; NAD(+) from deamido-NAD(+) (ammonia route): step 1/1. Its function is as follows. Catalyzes the ATP-dependent amidation of deamido-NAD to form NAD. Uses ammonia as a nitrogen source. The polypeptide is NH(3)-dependent NAD(+) synthetase (Sulfurisphaera tokodaii (strain DSM 16993 / JCM 10545 / NBRC 100140 / 7) (Sulfolobus tokodaii)).